A 547-amino-acid polypeptide reads, in one-letter code: Chaperonin GroEL (547 aa).

ATP contacts are provided by residues 30 to 33 (TLGP), Lys51, 87 to 91 (DGTTT), Gly415, and Asp496. The tract at residues 527-547 (SDKAEPMPMRGGMGGMGGMDF) is disordered. A compositionally biased stretch (gly residues) spans 537–547 (GGMGGMGGMDF).

The protein belongs to the chaperonin (HSP60) family. In terms of assembly, forms a cylinder of 14 subunits composed of two heptameric rings stacked back-to-back. Interacts with the co-chaperonin GroES.

The protein localises to the cytoplasm. The enzyme catalyses ATP + H2O + a folded polypeptide = ADP + phosphate + an unfolded polypeptide.. In terms of biological role, together with its co-chaperonin GroES, plays an essential role in assisting protein folding. The GroEL-GroES system forms a nano-cage that allows encapsulation of the non-native substrate proteins and provides a physical environment optimized to promote and accelerate protein folding. This Rickettsia africae (strain ESF-5) protein is Chaperonin GroEL.